The following is a 570-amino-acid chain: Probable metalloreductase AIM14 (570 aa).

7 consecutive transmembrane segments (helical) span residues 21–41, 70–90, 101–118, 142–162, 177–197, 204–224, and 230–250; these read IKYG…LALL, AIHL…HYSL, LGRL…LTLR, IITV…AIDD, FVGF…IGPM, LFYI…PIHS, and FPFL…RIVF. The region spanning 101-219 is the Ferric oxidoreductase domain; sequence LGRLSYALIP…NLVNVAFILL (119 aa). One can recognise an FAD-binding FR-type domain in the interval 250–388; sequence FAKSLMILNK…GGSGISFALP (139 aa). A disordered region spans residues 480–507; that stretch reads ISNFNSENADSNDKTPETSHSPTKENGS.

Belongs to the ferric reductase (FRE) family. AIM14 subfamily. In terms of assembly, interacts with ribosomes.

Its subcellular location is the membrane. Probable cell surface metalloreductase. May be involved in iron or copper homeostasis. The sequence is that of Probable metalloreductase AIM14 (AIM14) from Saccharomyces cerevisiae (strain JAY291) (Baker's yeast).